A 343-amino-acid chain; its full sequence is Methionine import ATP-binding protein MetN (343 aa).

One can recognise an ABC transporter domain in the interval 2-241 (IKLSNITKVF…PKTPLAQKFI (240 aa)). 38-45 (GASGAGKS) is a binding site for ATP.

The protein belongs to the ABC transporter superfamily. Methionine importer (TC 3.A.1.24) family. In terms of assembly, the complex is composed of two ATP-binding proteins (MetN), two transmembrane proteins (MetI) and a solute-binding protein (MetQ).

The protein resides in the cell inner membrane. The catalysed reaction is L-methionine(out) + ATP + H2O = L-methionine(in) + ADP + phosphate + H(+). It carries out the reaction D-methionine(out) + ATP + H2O = D-methionine(in) + ADP + phosphate + H(+). Part of the ABC transporter complex MetNIQ involved in methionine import. Responsible for energy coupling to the transport system. The polypeptide is Methionine import ATP-binding protein MetN (Shigella flexneri serotype 5b (strain 8401)).